Consider the following 948-residue polypeptide: UvrABC system protein A (948 aa).

33–40 (GLSGSGKS) lines the ATP pocket. The segment at 252 to 279 (CPICGFSIGELEPRMFSFNSPFGACPTC) adopts a C4-type zinc-finger fold. ABC transporter domains follow at residues 309 to 587 (WIPT…KKSL) and 607 to 935 (ASDR…KYLK). Position 639–646 (639–646 (GVSGSGKS)) interacts with ATP. The C4-type zinc-finger motif lies at 738–764 (CEACKGDGIIKIEMHFLPDVYVPCEVC).

This sequence belongs to the ABC transporter superfamily. UvrA family. In terms of assembly, forms a heterotetramer with UvrB during the search for lesions.

The protein resides in the cytoplasm. In terms of biological role, the UvrABC repair system catalyzes the recognition and processing of DNA lesions. UvrA is an ATPase and a DNA-binding protein. A damage recognition complex composed of 2 UvrA and 2 UvrB subunits scans DNA for abnormalities. When the presence of a lesion has been verified by UvrB, the UvrA molecules dissociate. The polypeptide is UvrABC system protein A (Staphylococcus aureus (strain N315)).